The primary structure comprises 181 residues: Cytidylate kinase (181 aa).

12–20 (GLAGSGTTT) is a binding site for ATP.

It belongs to the cytidylate kinase family. Type 2 subfamily.

The protein localises to the cytoplasm. The enzyme catalyses CMP + ATP = CDP + ADP. It carries out the reaction dCMP + ATP = dCDP + ADP. This is Cytidylate kinase (cmk) from Pyrococcus abyssi (strain GE5 / Orsay).